Here is a 122-residue protein sequence, read N- to C-terminus: Large ribosomal subunit protein uL14 (122 aa).

Belongs to the universal ribosomal protein uL14 family. As to quaternary structure, part of the 50S ribosomal subunit. Forms a cluster with proteins L3 and L19. In the 70S ribosome, L14 and L19 interact and together make contacts with the 16S rRNA in bridges B5 and B8.

Functionally, binds to 23S rRNA. Forms part of two intersubunit bridges in the 70S ribosome. This is Large ribosomal subunit protein uL14 from Syntrophotalea carbinolica (strain DSM 2380 / NBRC 103641 / GraBd1) (Pelobacter carbinolicus).